A 37-amino-acid polypeptide reads, in one-letter code: Large ribosomal subunit protein bL36 (37 aa).

Belongs to the bacterial ribosomal protein bL36 family.

The protein is Large ribosomal subunit protein bL36 of Desulforudis audaxviator (strain MP104C).